We begin with the raw amino-acid sequence, 123 residues long: Fluoride-specific ion channel FluC (123 aa).

Transmembrane regions (helical) follow at residues Val-4 to Val-24, Ala-31 to Met-51, Ile-64 to Ser-83, and Ala-100 to Ala-120. The Na(+) site is built by Gly-74 and Thr-77.

This sequence belongs to the fluoride channel Fluc/FEX (TC 1.A.43) family.

It localises to the cell inner membrane. The catalysed reaction is fluoride(in) = fluoride(out). Na(+) is not transported, but it plays an essential structural role and its presence is essential for fluoride channel function. Functionally, fluoride-specific ion channel. Important for reducing fluoride concentration in the cell, thus reducing its toxicity. The chain is Fluoride-specific ion channel FluC from Syntrophotalea carbinolica (strain DSM 2380 / NBRC 103641 / GraBd1) (Pelobacter carbinolicus).